Here is a 692-residue protein sequence, read N- to C-terminus: Threonine--tRNA ligase (692 aa).

The TGS domain occupies 2–59; that stretch reads AEAHISITVNGEAKEVEASQTGVELFADDKNIIAVRLNGELRDLYTPLHDGDNVESVT. A catalytic region spans residues 255-561; sequence DHRKLGQEMD…LLEHYAGAFP (307 aa). Zn(2+)-binding residues include cysteine 360, histidine 411, and histidine 538.

Belongs to the class-II aminoacyl-tRNA synthetase family. As to quaternary structure, homodimer. Requires Zn(2+) as cofactor.

Its subcellular location is the cytoplasm. It catalyses the reaction tRNA(Thr) + L-threonine + ATP = L-threonyl-tRNA(Thr) + AMP + diphosphate + H(+). Its function is as follows. Catalyzes the attachment of threonine to tRNA(Thr) in a two-step reaction: L-threonine is first activated by ATP to form Thr-AMP and then transferred to the acceptor end of tRNA(Thr). Also edits incorrectly charged L-seryl-tRNA(Thr). This Bifidobacterium animalis subsp. lactis (strain AD011) protein is Threonine--tRNA ligase.